The sequence spans 480 residues: Probable efflux pump outer membrane protein SepC (480 aa).

Positions 1-16 are cleaved as a signal peptide; the sequence is MKTHYLSIALSVALSG. Cys-17 carries N-palmitoyl cysteine lipidation. Cys-17 carries the S-diacylglycerol cysteine lipid modification.

It belongs to the outer membrane factor (OMF) (TC 1.B.17) family.

The protein resides in the cell outer membrane. In terms of biological role, probable outer membrane component of the SepABC efflux pump with unknown specificity. This chain is Probable efflux pump outer membrane protein SepC (sepC), found in Pseudomonas putida (strain ATCC 700007 / DSM 6899 / JCM 31910 / BCRC 17059 / LMG 24140 / F1).